The sequence spans 321 residues: Phosphate metabolism protein 8 (321 aa).

This sequence belongs to the SSM1 family.

Functionally, may be involved in phosphate metabolism. This is Phosphate metabolism protein 8 (PHM8) from Saccharomyces cerevisiae (strain ATCC 204508 / S288c) (Baker's yeast).